A 348-amino-acid chain; its full sequence is Papaya proteinase 4 (348 aa).

The signal sequence occupies residues 1–18; sequence MAIICSFSKLLFVAICLF. The propeptide at 19-132 is activation peptide; that stretch reads GHMSLSYCDF…EEFVNEDIVD (114 aa). 3 cysteine pairs are disulfide-bonded: Cys-154-Cys-195, Cys-188-Cys-227, and Cys-285-Cys-336. Residue Cys-157 is part of the active site. Active-site residues include His-291 and Asn-311.

It belongs to the peptidase C1 family.

The enzyme catalyses Preferential cleavage: Gly-|-Xaa, in proteins and in small molecule substrates.. With respect to regulation, not inhibited by cystatin. In terms of biological role, thiol protease with a substrate specificity very different from the other thiol proteases. This chain is Papaya proteinase 4, found in Carica papaya (Papaya).